A 209-amino-acid polypeptide reads, in one-letter code: 3-demethoxyubiquinol 3-hydroxylase (209 aa).

Positions 23–36 are enriched in low complexity; the sequence is PHATRAAPAPAQAP. Positions 23–42 are disordered; sequence PHATRAAPAPAQAPGEMTDS. Fe cation contacts are provided by Glu-58, Glu-88, His-91, Glu-140, Glu-172, and His-175.

It belongs to the COQ7 family. Requires Fe cation as cofactor.

It is found in the cell membrane. It carries out the reaction a 5-methoxy-2-methyl-3-(all-trans-polyprenyl)benzene-1,4-diol + AH2 + O2 = a 3-demethylubiquinol + A + H2O. It functions in the pathway cofactor biosynthesis; ubiquinone biosynthesis. In terms of biological role, catalyzes the hydroxylation of 2-nonaprenyl-3-methyl-6-methoxy-1,4-benzoquinol during ubiquinone biosynthesis. The sequence is that of 3-demethoxyubiquinol 3-hydroxylase from Variovorax paradoxus (strain S110).